The sequence spans 179 residues: Large ribosomal subunit protein uL5 (179 aa).

It belongs to the universal ribosomal protein uL5 family. As to quaternary structure, part of the 50S ribosomal subunit; part of the 5S rRNA/L5/L18/L25 subcomplex. Contacts the 5S rRNA and the P site tRNA. Forms a bridge to the 30S subunit in the 70S ribosome.

This is one of the proteins that bind and probably mediate the attachment of the 5S RNA into the large ribosomal subunit, where it forms part of the central protuberance. In the 70S ribosome it contacts protein S13 of the 30S subunit (bridge B1b), connecting the 2 subunits; this bridge is implicated in subunit movement. Contacts the P site tRNA; the 5S rRNA and some of its associated proteins might help stabilize positioning of ribosome-bound tRNAs. This Desulfitobacterium hafniense (strain Y51) protein is Large ribosomal subunit protein uL5.